The chain runs to 835 residues: Probable RNA-directed RNA polymerase (835 aa).

This sequence belongs to the totiviridae RNA-directed RNA polymerase family.

The enzyme catalyses RNA(n) + a ribonucleoside 5'-triphosphate = RNA(n+1) + diphosphate. In terms of biological role, RNA-dependent RNA polymerase which replicates the viral genome. Catalyzes the transcription of fully conservative plus-strand genomic RNAs that are extruded from the virion into the cytoplasm where they function as mRNAs for translation of viral proteins and also as substrates for encapsidation to form new virions. Once encapsidated, the positive strand is converted to dsRNA by the RNA-directed RNA polymerase. The polypeptide is Probable RNA-directed RNA polymerase (Helminthosporium victoriae virus-190S (Hv190SV)).